The primary structure comprises 618 residues: Cell pattern formation-associated protein STU1 (618 aa).

Residues 13 to 28 (MSAGPTQQPPTVTSYN) are compositionally biased toward polar residues. A disordered region spans residues 13-105 (MSAGPTQQPP…FDTSGQIAPP (93 aa)). The segment covering 48–59 (YGGYPYTNGMPS) has biased composition (low complexity). The span at 91-101 (NQYSGFDTSGQ) shows a compositional bias: polar residues. The 107-residue stretch at 110 to 216 (RVTATLWEDE…HNISALLYHP (107 aa)) folds into the HTH APSES-type domain. Residues 144–165 (GTKLLNVAGMTRGRRDGILKSE) constitute a DNA-binding region (H-T-H motif). Disordered stretches follow at residues 229 to 355 (AERR…YDGS) and 390 to 618 (SEMG…SRRR). Composition is skewed to polar residues over residues 256-266 (MSQNGSQSLSG), 284-298 (TSAS…SDSF), 305-326 (AMSN…TRSM), and 336-355 (GSTL…YDGS). The segment covering 438-451 (DHEHDPEYTHDSRT) has biased composition (basic and acidic residues). Residues 452–476 (YDNSQSQYNYTAPPVSSISSEQAHV) show a composition bias toward polar residues. The segment covering 494–512 (PRSAAAPQAYYQQAYSTSP) has biased composition (low complexity). Over residues 513 to 563 (RSATHQSTSNLYNVMSNDRGSTTNGSANGDVYSQSTDLSNGYATPVTNGNA) the composition is skewed to polar residues. Residues 566–588 (KRGRDDDDDRSSSSGQMDLKRRK) form a nuclear localization domain region.

It belongs to the EFG1/PHD1/stuA family.

It localises to the nucleus. Its function is as follows. Transcription factor that regulates asexual reproduction. Binds the StuA-response elements (StRE) with the consensus sequence 5'-(A/T)CGCG(T/A)N(A/C)-3' at the promoters of target genes. Required for appressorium-mediated infection of rice leaves due to its involvement in the mobilization of lipids and glycogen. The polypeptide is Cell pattern formation-associated protein STU1 (Pyricularia oryzae (strain 70-15 / ATCC MYA-4617 / FGSC 8958) (Rice blast fungus)).